A 375-amino-acid polypeptide reads, in one-letter code: 23S rRNA (uracil(747)-C(5))-methyltransferase RlmC (375 aa).

[4Fe-4S] cluster is bound by residues Cys3, Cys11, Cys14, and Cys87. S-adenosyl-L-methionine is bound by residues Gln212, Phe241, Glu262, and Asn307. Cys334 acts as the Nucleophile in catalysis.

Belongs to the class I-like SAM-binding methyltransferase superfamily. RNA M5U methyltransferase family. RlmC subfamily.

The catalysed reaction is uridine(747) in 23S rRNA + S-adenosyl-L-methionine = 5-methyluridine(747) in 23S rRNA + S-adenosyl-L-homocysteine + H(+). In terms of biological role, catalyzes the formation of 5-methyl-uridine at position 747 (m5U747) in 23S rRNA. In Escherichia coli (strain SMS-3-5 / SECEC), this protein is 23S rRNA (uracil(747)-C(5))-methyltransferase RlmC.